The sequence spans 86 residues: MLTSTLLAAATTPLEWSPTVGIIMVIANVIAITFGRQTIKYPSAEPALPSAKFFGGFGAPALLATTAFGHILGVGLVLGLHNLGRI.

Residues 1–8 (MLTSTLLA) constitute a propeptide that is removed on maturation. 2 helical membrane-spanning segments follow: residues 14-34 (LEWS…AITF) and 60-80 (PALL…VLGL).

It belongs to the PsaG/PsaK family. The cyanobacterial PSI reaction center is composed of one copy each of PsaA,B,C,D,E,F,I,J,K,L,M and X, and forms dimeric and tetrameric complexes.

Its subcellular location is the cellular thylakoid membrane. This is Photosystem I reaction center subunit PsaK 1 (psaK1) from Nostoc sp. (strain PCC 7120 / SAG 25.82 / UTEX 2576).